A 194-amino-acid chain; its full sequence is Peptidyl-tRNA hydrolase (194 aa).

Position 17 (Tyr17) interacts with tRNA. Catalysis depends on His22, which acts as the Proton acceptor. 3 residues coordinate tRNA: Phe68, Asn70, and Asn116.

It belongs to the PTH family. Monomer.

It localises to the cytoplasm. It carries out the reaction an N-acyl-L-alpha-aminoacyl-tRNA + H2O = an N-acyl-L-amino acid + a tRNA + H(+). Functionally, hydrolyzes ribosome-free peptidyl-tRNAs (with 1 or more amino acids incorporated), which drop off the ribosome during protein synthesis, or as a result of ribosome stalling. Its function is as follows. Catalyzes the release of premature peptidyl moieties from peptidyl-tRNA molecules trapped in stalled 50S ribosomal subunits, and thus maintains levels of free tRNAs and 50S ribosomes. In Actinobacillus pleuropneumoniae serotype 5b (strain L20), this protein is Peptidyl-tRNA hydrolase.